The primary structure comprises 335 residues: Urokinase plasminogen activator surface receptor (335 aa).

The signal sequence occupies residues 1–22 (MGHPPLLPLLLLLHTCVPASWG). 3 consecutive UPAR/Ly6 domains span residues 23-114 (LRCM…RSRY), 115-213 (LECI…PQNG), and 214-305 (RQCY…YRSG). Cystine bridges form between Cys-25–Cys-46, Cys-28–Cys-34, and Cys-39–Cys-67. N-linked (GlcNAc...) asparagine glycosylation is present at Asn-74. Intrachain disulfides connect Cys-93–Cys-98, Cys-117–Cys-144, Cys-120–Cys-127, Cys-137–Cys-169, Cys-175–Cys-192, Cys-193–Cys-198, Cys-216–Cys-244, Cys-219–Cys-227, Cys-237–Cys-263, Cys-269–Cys-287, and Cys-288–Cys-293. 4 N-linked (GlcNAc...) asparagine glycosylation sites follow: Asn-184, Asn-194, Asn-222, and Asn-255. Gly-305 carries the GPI-anchor amidated glycine lipid modification. Positions 306–335 (AAPQPGPAHLSLTITLLMTARLWGGTLLWT) are cleaved as a propeptide — removed in mature form.

Monomer. Interacts with MRC2. Interacts (via the UPAR/Ly6 domains) with SRPX2. Interacts with FAP (seprase); the interaction occurs at the cell surface of invadopodia membrane. Interacts with SORL1 (via N-terminal ectodomain); this interaction decreases PLAUR internalization. The ternary complex composed of PLAUR-PLAU-SERPINE1 also interacts with SORL1. Interacts with CD82; this interaction prevents PLAUR from binding to its high affinity ligand PLAU. As to expression, expressed in neurons of the rolandic area of the brain (at protein level). Expressed in the brain.

Its subcellular location is the cell membrane. The protein localises to the cell projection. It is found in the invadopodium membrane. The protein resides in the secreted. Its function is as follows. Acts as a receptor for urokinase plasminogen activator. Plays a role in localizing and promoting plasmin formation. Mediates the proteolysis-independent signal transduction activation effects of U-PA. It is subject to negative-feedback regulation by U-PA which cleaves it into an inactive form. The protein is Urokinase plasminogen activator surface receptor (PLAUR) of Homo sapiens (Human).